A 436-amino-acid polypeptide reads, in one-letter code: tRNA(Ile)-lysidine synthase (436 aa).

27-32 (SGGVDS) is an ATP binding site.

The protein belongs to the tRNA(Ile)-lysidine synthase family.

The protein resides in the cytoplasm. The enzyme catalyses cytidine(34) in tRNA(Ile2) + L-lysine + ATP = lysidine(34) in tRNA(Ile2) + AMP + diphosphate + H(+). In terms of biological role, ligates lysine onto the cytidine present at position 34 of the AUA codon-specific tRNA(Ile) that contains the anticodon CAU, in an ATP-dependent manner. Cytidine is converted to lysidine, thus changing the amino acid specificity of the tRNA from methionine to isoleucine. This Vibrio vulnificus (strain YJ016) protein is tRNA(Ile)-lysidine synthase.